The sequence spans 218 residues: Thiopurine S-methyltransferase (218 aa).

S-adenosyl-L-methionine contacts are provided by Trp-10, Leu-45, Glu-66, and Arg-123.

This sequence belongs to the class I-like SAM-binding methyltransferase superfamily. TPMT family.

The protein resides in the cytoplasm. It catalyses the reaction S-adenosyl-L-methionine + a thiopurine = S-adenosyl-L-homocysteine + a thiopurine S-methylether.. The protein is Thiopurine S-methyltransferase of Shewanella baltica (strain OS185).